A 637-amino-acid polypeptide reads, in one-letter code: DNA mismatch repair protein MutL (637 aa).

It belongs to the DNA mismatch repair MutL/HexB family.

Functionally, this protein is involved in the repair of mismatches in DNA. It is required for dam-dependent methyl-directed DNA mismatch repair. May act as a 'molecular matchmaker', a protein that promotes the formation of a stable complex between two or more DNA-binding proteins in an ATP-dependent manner without itself being part of a final effector complex. The polypeptide is DNA mismatch repair protein MutL (Actinobacillus succinogenes (strain ATCC 55618 / DSM 22257 / CCUG 43843 / 130Z)).